A 299-amino-acid chain; its full sequence is GTP cyclohydrolase FolE2 (299 aa).

Belongs to the GTP cyclohydrolase IV family.

It catalyses the reaction GTP + H2O = 7,8-dihydroneopterin 3'-triphosphate + formate + H(+). Its pathway is cofactor biosynthesis; 7,8-dihydroneopterin triphosphate biosynthesis; 7,8-dihydroneopterin triphosphate from GTP: step 1/1. In terms of biological role, converts GTP to 7,8-dihydroneopterin triphosphate. The protein is GTP cyclohydrolase FolE2 of Klebsiella pneumoniae.